A 159-amino-acid chain; its full sequence is Transcription elongation factor GreA (159 aa).

A coiled-coil region spans residues 14–76 (IKKLENELEY…QLENMLKNAS (63 aa)).

It belongs to the GreA/GreB family.

Necessary for efficient RNA polymerase transcription elongation past template-encoded arresting sites. The arresting sites in DNA have the property of trapping a certain fraction of elongating RNA polymerases that pass through, resulting in locked ternary complexes. Cleavage of the nascent transcript by cleavage factors such as GreA or GreB allows the resumption of elongation from the new 3'terminus. GreA releases sequences of 2 to 3 nucleotides. The chain is Transcription elongation factor GreA from Clostridium kluyveri (strain NBRC 12016).